Consider the following 707-residue polypeptide: Ribosomal RNA large subunit methyltransferase K/L (707 aa).

Residues 43 to 154 (QIYRCCLWSR…KDKAILGVDM (112 aa)) enclose the THUMP domain.

The protein belongs to the methyltransferase superfamily. RlmKL family.

It localises to the cytoplasm. It carries out the reaction guanosine(2445) in 23S rRNA + S-adenosyl-L-methionine = N(2)-methylguanosine(2445) in 23S rRNA + S-adenosyl-L-homocysteine + H(+). The catalysed reaction is guanosine(2069) in 23S rRNA + S-adenosyl-L-methionine = N(2)-methylguanosine(2069) in 23S rRNA + S-adenosyl-L-homocysteine + H(+). Its function is as follows. Specifically methylates the guanine in position 2445 (m2G2445) and the guanine in position 2069 (m7G2069) of 23S rRNA. The chain is Ribosomal RNA large subunit methyltransferase K/L from Vibrio parahaemolyticus serotype O3:K6 (strain RIMD 2210633).